A 561-amino-acid chain; its full sequence is SH3 domain-binding protein 2 (561 aa).

The region spanning 26 to 130 (GVAKAGYLHK…WMALLRREIG (105 aa)) is the PH domain. Disordered regions lie at residues 160–316 (VDIS…GACS) and 333–451 (KLKS…YEKV). The segment covering 170–188 (DNEDYEHDDEDDSYLEPDS) has biased composition (acidic residues). Phosphotyrosine; by SYK is present on residues Tyr174 and Tyr183. The SH3-binding motif lies at 201 to 210 (PPAYPPPPVP). 2 stretches are compositionally biased toward pro residues: residues 202 to 213 (PAYPPPPVPTPR) and 233 to 242 (PLLPPPPPKH). The span at 252-266 (EDSKRDPLCPRRAEP) shows a compositional bias: basic and acidic residues. Ser278 is subject to Phosphoserine. The segment covering 342 to 354 (RGPPTSEPPPVPA) has biased composition (pro residues). Residues Ser416 and Ser427 each carry the phosphoserine modification. The residue at position 448 (Tyr448) is a Phosphotyrosine; by SYK. Residues 457–555 (VFVNTTESCE…HQSLLLRHPY (99 aa)) form the SH2 domain.

In terms of processing, phosphorylated. Phosphorylation at Tyr-448 may stimulate the activity of the LYN kinase. As to expression, expressed in a variety of tissues including lung, liver, skeletal muscle, kidney and pancreas.

Functionally, binds differentially to the SH3 domains of certain proteins of signal transduction pathways. Binds to phosphatidylinositols; linking the hemopoietic tyrosine kinase fes to the cytoplasmic membrane in a phosphorylation dependent mechanism. The chain is SH3 domain-binding protein 2 (SH3BP2) from Homo sapiens (Human).